The sequence spans 260 residues: Universal stress protein PHOS34 (260 aa).

Residues 1–33 constitute a chloroplast transit peptide; sequence MNPDSDYPHLPNIKIHHPSSPRHSHHHSSSTPS. The interval 1–42 is disordered; the sequence is MNPDSDYPHLPNIKIHHPSSPRHSHHHSSSTPSAATPTPTAG. Over residues 14-28 the composition is skewed to basic residues; sequence KIHHPSSPRHSHHHS. Pro18 is a binding site for ATP. At Ser20 the chain carries Phosphoserine; by MAPK3 and MAPK6. Low complexity predominate over residues 29–41; that stretch reads SSTPSAATPTPTA. Val80 contacts ATP. The segment at 92-118 is disordered; that stretch reads GPLPLQTPPPPSAATDPGAQPKPSQED. ATP is bound by residues 170 to 179 and 187 to 189; these read GSRGFGAEKR and SVS. The disordered stretch occupies residues 209–260; the sequence is RDGPAPPGNVGATREAIVTVKSRRDDDDDDDEDHEAKIAAAASDHHEHIKDE. Ser230 carries the post-translational modification Phosphoserine. Residues 251-260 are compositionally biased toward basic and acidic residues; the sequence is SDHHEHIKDE.

Belongs to the universal stress protein A family. Phosphorylated by MAPK3 and MAPK6 after pathogenic elicitation (e.g. bacterial flg22, Phytophthora infestans zoospores and xylanase).

It localises to the plastid. Its subcellular location is the chloroplast. The chain is Universal stress protein PHOS34 from Arabidopsis thaliana (Mouse-ear cress).